The primary structure comprises 1048 residues: B3 domain-containing protein Os02g0598200 (1048 aa).

The interval 1–345 (MDGAVRGQGC…QKERVASSDN (345 aa)) is disordered. Residues 16-25 (SFNKTKKKNR) show a composition bias toward basic residues. 6 stretches are compositionally biased toward basic and acidic residues: residues 26 to 134 (NCSD…SDDM), 151 to 162 (KKNSRNDADEEK), 169 to 214 (CSDD…GDKK), 243 to 253 (KNMKSDGDSYK), 281 to 295 (AKERKMRPSDSMEMK), and 332 to 345 (LKREQKERVASSDN). A DNA-binding region (TF-B3 1) is located at residues 375-468 (AFAFFKFVRD…TFSVRVFGID (94 aa)). Residues 505 to 528 (QYQDSEDIHDGPNVSGESPRSKEP) are disordered. A DNA-binding region (TF-B3 2) is located at residues 953 to 1048 (LQFCIPSTIQ…LAFQVYITRK (96 aa)).

It localises to the nucleus. This Oryza sativa subsp. japonica (Rice) protein is B3 domain-containing protein Os02g0598200.